The following is a 194-amino-acid chain: Probable WRKY transcription factor 51 (194 aa).

The tract at residues 58–97 is disordered; it reads SSETFTGESGGSGSATTLSKKESTNRGSKESDQTKETGHR. The segment covering 76 to 96 has biased composition (basic and acidic residues); that stretch reads SKKESTNRGSKESDQTKETGH. The WRKY DNA-binding region spans 104 to 169; that stretch reads SKIDVMDDGF…YEGVHNHESL (66 aa).

It belongs to the WRKY group II-c family. As to quaternary structure, interacts with CAMBP25/VQ15.

Its subcellular location is the nucleus. In terms of biological role, transcription factor. Interacts specifically with the W box (5'-(T)TGAC[CT]-3'), a frequently occurring elicitor-responsive cis-acting element. Involved in defense responses. May act as positive regulator of salicylic acid (SA)-mediated signaling and negative regulator of jasmonic acid (JA)-mediated signaling. This chain is Probable WRKY transcription factor 51 (WRKY51), found in Arabidopsis thaliana (Mouse-ear cress).